We begin with the raw amino-acid sequence, 209 residues long: Glycine cleavage system H-like protein gcvH4 (209 aa).

The span at 35–51 (NNNNNNNNNNNNNNNNN) shows a compositional bias: low complexity. The segment at 35 to 56 (NNNNNNNNNNNNNNNNNRNKKL) is disordered. The Lipoyl-binding domain occupies 73–159 (FATIGITNYV…KTTTTTTKIK (87 aa)).

This sequence belongs to the GcvH family.

This chain is Glycine cleavage system H-like protein gcvH4 (gcvH4), found in Dictyostelium discoideum (Social amoeba).